Reading from the N-terminus, the 144-residue chain is D-aminoacyl-tRNA deacylase (144 aa).

Residues 137 to 138 carry the Gly-cisPro motif, important for rejection of L-amino acids motif; that stretch reads GP.

This sequence belongs to the DTD family. Homodimer.

It localises to the cytoplasm. The enzyme catalyses glycyl-tRNA(Ala) + H2O = tRNA(Ala) + glycine + H(+). It carries out the reaction a D-aminoacyl-tRNA + H2O = a tRNA + a D-alpha-amino acid + H(+). Its function is as follows. An aminoacyl-tRNA editing enzyme that deacylates mischarged D-aminoacyl-tRNAs. Also deacylates mischarged glycyl-tRNA(Ala), protecting cells against glycine mischarging by AlaRS. Acts via tRNA-based rather than protein-based catalysis; rejects L-amino acids rather than detecting D-amino acids in the active site. By recycling D-aminoacyl-tRNA to D-amino acids and free tRNA molecules, this enzyme counteracts the toxicity associated with the formation of D-aminoacyl-tRNA entities in vivo and helps enforce protein L-homochirality. This Acinetobacter baumannii (strain SDF) protein is D-aminoacyl-tRNA deacylase.